We begin with the raw amino-acid sequence, 250 residues long: F-box only protein 17 (250 aa).

An F-box domain is found at 15–62; it reads HMALAELPPELLLQVLSHVPPRALVTRCRPVCRAWRDLVDGPSVWLLQ. An FBA domain is found at 99 to 250; it reads FCLLAPLGRN…GLLQGLSRLH (152 aa).

In terms of assembly, part of a SCF (SKP1-cullin-F-box) protein ligase complex. Interacts with SKP1 and CUL1.

Substrate-recognition component of the SCF (SKP1-CUL1-F-box protein)-type E3 ubiquitin ligase complex. Able to recognize and bind denatured glycoproteins, which are modified with complex-type oligosaccharides. Also recognizes sulfated glycans. Does not bind high-mannose glycoproteins. This is F-box only protein 17 (Fbxo17) from Rattus norvegicus (Rat).